A 127-amino-acid chain; its full sequence is Ribonuclease P protein component 1 (127 aa).

Belongs to the eukaryotic/archaeal RNase P protein component 1 family. In terms of assembly, consists of a catalytic RNA component and at least 5 protein subunits. Forms a heterodimeric subcomplex with Rnp4. Reconstituted enzyme missing individual protein subunits is suboptimally active, showing each subunit contributes to optimization of activity.

It localises to the cytoplasm. The enzyme catalyses Endonucleolytic cleavage of RNA, removing 5'-extranucleotides from tRNA precursor.. Part of ribonuclease P (RNase P), a protein complex that generates mature tRNA molecules by cleaving their 5'-ends. Binds RNase P RNA. In Pyrococcus horikoshii (strain ATCC 700860 / DSM 12428 / JCM 9974 / NBRC 100139 / OT-3), this protein is Ribonuclease P protein component 1.